Here is a 765-residue protein sequence, read N- to C-terminus: Protein transport protein Sec23A (765 aa).

Zn(2+) is bound by residues Cys-61, Cys-66, Cys-85, and Cys-88. The Gelsolin-like repeat unit spans residues 632–718 (PEPVLLDSSS…EHGGSQARFL (87 aa)).

This sequence belongs to the SEC23/SEC24 family. SEC23 subfamily. In terms of assembly, COPII is composed of at least five proteins: the Sec23/24 complex, the Sec13/31 complex and Sar1.

The protein localises to the cytoplasmic vesicle. It is found in the COPII-coated vesicle membrane. It localises to the endoplasmic reticulum membrane. The protein resides in the cytoplasm. Its subcellular location is the cytosol. Component of the coat protein complex II (COPII) which promotes the formation of transport vesicles from the endoplasmic reticulum (ER). The coat has two main functions, the physical deformation of the endoplasmic reticulum membrane into vesicles and the selection of cargo molecules for their transport to the Golgi complex. In Danio rerio (Zebrafish), this protein is Protein transport protein Sec23A.